Here is a 326-residue protein sequence, read N- to C-terminus: (+)-T-muurolol synthase ((2E,6E)-farnesyl diphosphate cyclizing) (326 aa).

Residues Asp-81 and Asp-85 each contribute to the Mg(2+) site. Positions 81-85 (DDQCD) match the DDXXD motif motif. Arg-175 serves as a coordination point for substrate. Residues Asn-221 and Ser-225 each coordinate Mg(2+). Lys-228 contributes to the substrate binding site. Residue Glu-229 participates in Mg(2+) binding. 309-310 (RY) contributes to the substrate binding site.

This sequence belongs to the terpene synthase family. Mg(2+) is required as a cofactor.

The enzyme catalyses (2E,6E)-farnesyl diphosphate + H2O = (+)-T-muurolol + diphosphate. It functions in the pathway secondary metabolite biosynthesis; terpenoid biosynthesis. Functionally, catalyzes the conversion of (2E,6E)-farnesyl diphosphate (FPP) into (+)-T-muurolol via a 1,10-cyclization, which requires isomerization of FPP to nerolidyl diphosphate (NPP) and then abstraction of the pyrophosphate from intermediate NPP leading to a (E,Z)-germacradienyl (helminthogermacradienyl) cation. The sequence is that of (+)-T-muurolol synthase ((2E,6E)-farnesyl diphosphate cyclizing) from Roseiflexus castenholzii (strain DSM 13941 / HLO8).